We begin with the raw amino-acid sequence, 457 residues long: Bifunctional protein GlmU (457 aa).

The segment at 1–228 is pyrophosphorylase; the sequence is MEELVSVILA…SEEIIGVNSR (228 aa). UDP-N-acetyl-alpha-D-glucosamine is bound by residues 9–12, K23, Q73, and 78–79; these read LAAG and GT. D102 is a Mg(2+) binding site. UDP-N-acetyl-alpha-D-glucosamine contacts are provided by G139, E154, N169, and N226. Residue N226 participates in Mg(2+) binding. Residues 229 to 249 form a linker region; that stretch reads VQLSNAEKVMRRRINEKHMEN. The interval 250–457 is N-acetyltransferase; sequence GVTIIDPDST…VEERIKKGRL (208 aa). Positions 331 and 349 each coordinate UDP-N-acetyl-alpha-D-glucosamine. The active-site Proton acceptor is the H361. 2 residues coordinate UDP-N-acetyl-alpha-D-glucosamine: Y364 and N375. Acetyl-CoA is bound by residues 384-385, A421, and R438; that span reads NY.

The protein in the N-terminal section; belongs to the N-acetylglucosamine-1-phosphate uridyltransferase family. This sequence in the C-terminal section; belongs to the transferase hexapeptide repeat family. In terms of assembly, homotrimer. Mg(2+) is required as a cofactor.

The protein localises to the cytoplasm. The enzyme catalyses alpha-D-glucosamine 1-phosphate + acetyl-CoA = N-acetyl-alpha-D-glucosamine 1-phosphate + CoA + H(+). It catalyses the reaction N-acetyl-alpha-D-glucosamine 1-phosphate + UTP + H(+) = UDP-N-acetyl-alpha-D-glucosamine + diphosphate. The protein operates within nucleotide-sugar biosynthesis; UDP-N-acetyl-alpha-D-glucosamine biosynthesis; N-acetyl-alpha-D-glucosamine 1-phosphate from alpha-D-glucosamine 6-phosphate (route II): step 2/2. It participates in nucleotide-sugar biosynthesis; UDP-N-acetyl-alpha-D-glucosamine biosynthesis; UDP-N-acetyl-alpha-D-glucosamine from N-acetyl-alpha-D-glucosamine 1-phosphate: step 1/1. Its pathway is bacterial outer membrane biogenesis; LPS lipid A biosynthesis. Catalyzes the last two sequential reactions in the de novo biosynthetic pathway for UDP-N-acetylglucosamine (UDP-GlcNAc). The C-terminal domain catalyzes the transfer of acetyl group from acetyl coenzyme A to glucosamine-1-phosphate (GlcN-1-P) to produce N-acetylglucosamine-1-phosphate (GlcNAc-1-P), which is converted into UDP-GlcNAc by the transfer of uridine 5-monophosphate (from uridine 5-triphosphate), a reaction catalyzed by the N-terminal domain. The polypeptide is Bifunctional protein GlmU (Caldanaerobacter subterraneus subsp. tengcongensis (strain DSM 15242 / JCM 11007 / NBRC 100824 / MB4) (Thermoanaerobacter tengcongensis)).